We begin with the raw amino-acid sequence, 164 residues long: Magnesium-dependent phosphatase 1 (164 aa).

The Nucleophile role is filled by aspartate 11. Aspartate 11 lines the Mg(2+) pocket. Leucine 12 and aspartate 13 together coordinate phosphate. Aspartate 13 is a Mg(2+) binding site. The active-site Proton donor is the aspartate 13. Residue tryptophan 20 participates in substrate binding. Phosphate contacts are provided by serine 69, arginine 70, and lysine 100. Substrate is bound at residue arginine 70. Aspartate 123 provides a ligand contact to Mg(2+).

The protein belongs to the HAD-like hydrolase superfamily. Requires Mg(2+) as cofactor.

The catalysed reaction is O-phospho-L-tyrosyl-[protein] + H2O = L-tyrosyl-[protein] + phosphate. Its activity is regulated as follows. Inhibited by vanadate and zinc, and slightly by calcium. In terms of biological role, magnesium-dependent phosphatase which may act as a tyrosine phosphatase. In Mus musculus (Mouse), this protein is Magnesium-dependent phosphatase 1 (Mdp1).